We begin with the raw amino-acid sequence, 196 residues long: Small ribosomal subunit protein uS4c (196 aa).

Residues 17–36 (ALPGLTRKTPKSGSNLKKKF) form a disordered region. Residues 89-157 (MRLDNILFRL…VQNYIASSDP (69 aa)) enclose the S4 RNA-binding domain.

The protein belongs to the universal ribosomal protein uS4 family. In terms of assembly, part of the 30S ribosomal subunit. Contacts protein S5. The interaction surface between S4 and S5 is involved in control of translational fidelity.

The protein localises to the plastid. It localises to the chloroplast. Its function is as follows. One of the primary rRNA binding proteins, it binds directly to 16S rRNA where it nucleates assembly of the body of the 30S subunit. Functionally, with S5 and S12 plays an important role in translational accuracy. This Calamagrostis epigeios (Wood small-reed grass) protein is Small ribosomal subunit protein uS4c (rps4).